The following is a 93-amino-acid chain: UPF0358 protein YlaN (93 aa).

It belongs to the UPF0358 family.

Its function is as follows. Essential for cell growth and for normal cell shape. The sequence is that of UPF0358 protein YlaN (ylaN) from Bacillus subtilis (strain 168).